An 86-amino-acid chain; its full sequence is uncharacterized protein (86 aa).

A helical membrane pass occupies residues 4 to 24 (LFFTLIAFVAIILLMSIGFII).

It localises to the membrane. This is an uncharacterized protein from Haemophilus influenzae (strain ATCC 51907 / DSM 11121 / KW20 / Rd).